The sequence spans 359 residues: N-acetyl-gamma-glutamyl-phosphate reductase (359 aa).

Cys-162 is an active-site residue.

This sequence belongs to the NAGSA dehydrogenase family. Type 1 subfamily.

The protein resides in the cytoplasm. It carries out the reaction N-acetyl-L-glutamate 5-semialdehyde + phosphate + NADP(+) = N-acetyl-L-glutamyl 5-phosphate + NADPH + H(+). It participates in amino-acid biosynthesis; L-arginine biosynthesis; N(2)-acetyl-L-ornithine from L-glutamate: step 3/4. Its function is as follows. Catalyzes the NADPH-dependent reduction of N-acetyl-5-glutamyl phosphate to yield N-acetyl-L-glutamate 5-semialdehyde. This chain is N-acetyl-gamma-glutamyl-phosphate reductase, found in Prochlorococcus marinus (strain MIT 9211).